Reading from the N-terminus, the 364-residue chain is tRNA N6-adenosine threonylcarbamoyltransferase (364 aa).

Fe cation-binding residues include histidine 118 and histidine 122. Substrate-binding positions include 140-144 (LVSGG), aspartate 173, glycine 186, and asparagine 288. Aspartate 316 lines the Fe cation pocket.

It belongs to the KAE1 / TsaD family. Requires Fe(2+) as cofactor.

Its subcellular location is the cytoplasm. It carries out the reaction L-threonylcarbamoyladenylate + adenosine(37) in tRNA = N(6)-L-threonylcarbamoyladenosine(37) in tRNA + AMP + H(+). Its function is as follows. Required for the formation of a threonylcarbamoyl group on adenosine at position 37 (t(6)A37) in tRNAs that read codons beginning with adenine. Is involved in the transfer of the threonylcarbamoyl moiety of threonylcarbamoyl-AMP (TC-AMP) to the N6 group of A37, together with TsaE and TsaB. TsaD likely plays a direct catalytic role in this reaction. The sequence is that of tRNA N6-adenosine threonylcarbamoyltransferase from Cereibacter sphaeroides (strain KD131 / KCTC 12085) (Rhodobacter sphaeroides).